Consider the following 345-residue polypeptide: Anthranilate phosphoribosyltransferase (345 aa).

5-phospho-alpha-D-ribose 1-diphosphate contacts are provided by residues G80, 83–84 (GD), T88, 90–93 (NIST), 108–116 (KHGNRSVSS), and S120. G80 is a binding site for anthranilate. S92 provides a ligand contact to Mg(2+). N111 is a binding site for anthranilate. Anthranilate is bound at residue R166. Mg(2+)-binding residues include D225 and E226.

Belongs to the anthranilate phosphoribosyltransferase family. In terms of assembly, homodimer. Mg(2+) is required as a cofactor.

The catalysed reaction is N-(5-phospho-beta-D-ribosyl)anthranilate + diphosphate = 5-phospho-alpha-D-ribose 1-diphosphate + anthranilate. Its pathway is amino-acid biosynthesis; L-tryptophan biosynthesis; L-tryptophan from chorismate: step 2/5. Catalyzes the transfer of the phosphoribosyl group of 5-phosphorylribose-1-pyrophosphate (PRPP) to anthranilate to yield N-(5'-phosphoribosyl)-anthranilate (PRA). This chain is Anthranilate phosphoribosyltransferase, found in Desulforamulus reducens (strain ATCC BAA-1160 / DSM 100696 / MI-1) (Desulfotomaculum reducens).